Here is a 114-residue protein sequence, read N- to C-terminus: Large ribosomal subunit protein bL19 (114 aa).

This sequence belongs to the bacterial ribosomal protein bL19 family.

Its function is as follows. This protein is located at the 30S-50S ribosomal subunit interface and may play a role in the structure and function of the aminoacyl-tRNA binding site. The polypeptide is Large ribosomal subunit protein bL19 (Lysinibacillus sphaericus (strain C3-41)).